The chain runs to 301 residues: Hydroxymycolate synthase MmaA4 (301 aa).

Residues 42-43 (YS), 81-83 (GCG), 103-108 (TLSKNQ), 132-133 (WE), and Ile145 each bind S-adenosyl-L-methionine. Cys278 is an active-site residue.

This sequence belongs to the CFA/CMAS family. In terms of assembly, monomer.

It functions in the pathway lipid metabolism; mycolic acid biosynthesis. Its activity is regulated as follows. Inhibited by S-adenosyl-N-decyl-aminoethyl (SADAE). Its function is as follows. Involved in the biosynthesis of hydroxymycolate, a common precursor of oxygenated mycolic acids (methoxy-mycolate and keto-mycolate). Probably transfers a methyl group from the S-adenosylmethionine (SAM) cofactor and, subsequently or simultaneously, a water molecule onto the double bound of ethylene substrates, leading to the formation of the hydroxylated product at the distal position. Involved in the activation of the antitubercular drug thiacetazone (TAC). The polypeptide is Hydroxymycolate synthase MmaA4 (mmaA4) (Mycobacterium tuberculosis (strain ATCC 25618 / H37Rv)).